The following is a 912-amino-acid chain: Metabotropic glutamate receptor 4 (912 aa).

The N-terminal stretch at 1 to 32 (MPGKSGLGWWWARLPLCLLLSLYGPWMPSSLG) is a signal peptide. Residues 33-586 (KPKGHPHMNS…PIIKLEWDSP (554 aa)) lie on the Extracellular side of the membrane. Residues Cys67 and Cys109 are joined by a disulfide bond. Asn98 is a glycosylation site (N-linked (GlcNAc...) asparagine). L-glutamate contacts are provided by residues Ser159, 180 to 182 (AST), and Tyr230. Intrachain disulfides connect Cys249/Cys538, Cys372/Cys388, Cys428/Cys435, Cys520/Cys539, Cys524/Cys542, Cys545/Cys557, and Cys560/Cys573. An N-linked (GlcNAc...) asparagine glycan is attached at Asn301. Asp312 provides a ligand contact to L-glutamate. Residue Lys405 coordinates L-glutamate. 2 N-linked (GlcNAc...) asparagine glycosylation sites follow: Asn454 and Asn484. A glycan (N-linked (GlcNAc...) asparagine) is linked at Asn569. Residues 587 to 607 (WAVLPLFLAVVGIAATLFVVI) form a helical membrane-spanning segment. The Cytoplasmic segment spans residues 608-624 (TFVRYNDTPIVKASGRE). A helical membrane pass occupies residues 625 to 645 (LSYVLLAGIFLCYATTFLMIA). Over 646–653 (EPDLGTCS) the chain is Extracellular. Residues 654 to 671 (LRRIFLGLGMSISYAALL) traverse the membrane as a helical segment. The Cytoplasmic segment spans residues 672-699 (TKTNRIYRIFEQGKRSVSAPRFISPASQ). Residues 700–720 (LAITFSLISLQLLGICVWFVV) form a helical membrane-spanning segment. The Extracellular segment spans residues 721-751 (DPSHSVVDFQDQRTLDPRFARGVLKCDISDL). The helical transmembrane segment at 752-772 (SLICLLGYSMLLMVTCTVYAI) threads the bilayer. At 773–786 (KTRGVPETFNEAKP) the chain is on the cytoplasmic side. The chain crosses the membrane as a helical span at residues 787 to 807 (IGFTMYTTCIVWLAFIPIFFG). Topologically, residues 808 to 826 (TSQSADKLYIQTTTLTVSV) are extracellular. The chain crosses the membrane as a helical span at residues 827-847 (SLSASVSLGMLYMPKVYIILF). The Cytoplasmic portion of the chain corresponds to 848–912 (HPEQNVPKRK…TYVTYTNHAI (65 aa)).

Belongs to the G-protein coupled receptor 3 family. Interacts with PICK1.

Its subcellular location is the cell membrane. In terms of biological role, G-protein coupled receptor for glutamate. Ligand binding causes a conformation change that triggers signaling via guanine nucleotide-binding proteins (G proteins) and modulates the activity of down-stream effectors. Signaling inhibits adenylate cyclase activity. This is Metabotropic glutamate receptor 4 (GRM4) from Macaca fascicularis (Crab-eating macaque).